Consider the following 680-residue polypeptide: Oligopeptidase A (680 aa).

H469 contacts Zn(2+). E470 is a catalytic residue. Positions 473 and 476 each coordinate Zn(2+).

Belongs to the peptidase M3 family. Requires Zn(2+) as cofactor.

It catalyses the reaction Hydrolysis of oligopeptides, with broad specificity. Gly or Ala commonly occur as P1 or P1' residues, but more distant residues are also important, as is shown by the fact that Z-Gly-Pro-Gly-|-Gly-Pro-Ala is cleaved, but not Z-(Gly)(5).. Functionally, may play a specific role in the degradation of signal peptides after they are released from precursor forms of secreted proteins. Can cleave N-acetyl-L-Ala(4). In Escherichia coli (strain K12), this protein is Oligopeptidase A (prlC).